We begin with the raw amino-acid sequence, 132 residues long: MSMSDPIADFLTRIRNANMAQHESVEAPASKMKKDIAEILKNEGFIRDVEYVDDNKQGIIRVFLKYGNDGQRVISGLKRISKPGLRTYVKSDAVPKVLNGLGIAIISTSEGVVTDKVARAKKIGGEVIAYVW.

Belongs to the universal ribosomal protein uS8 family. Part of the 30S ribosomal subunit. Contacts proteins S5 and S12.

Its function is as follows. One of the primary rRNA binding proteins, it binds directly to 16S rRNA central domain where it helps coordinate assembly of the platform of the 30S subunit. In Limosilactobacillus reuteri (strain DSM 20016) (Lactobacillus reuteri), this protein is Small ribosomal subunit protein uS8.